Reading from the N-terminus, the 347-residue chain is Terpene synthase 2 (347 aa).

Mg(2+)-binding residues include aspartate 103, asparagine 247, serine 251, and glutamate 255. Positions 103–107 (DDLLE) match the D(D/E)XX(D/E) motif motif. An NSE motif motif is present at residues 247-255 (NDIFSLKKE). The short motif at 329-336 (WCSKSTRY) is the WxxxxxRY motif element.

Belongs to the terpene synthase family. Mg(2+) serves as cofactor.

Functionally, terpene synthase that may be involved in the production of volatile terpenoids. Does not show detectable terpene products with either farnesyl diphosphate (FPP) or geranyl diphosphate (GPP). P.polycephalum has a unique biology and these volatile terpenoids could function in internal communication of P.polycephalum, to mark the territory that have been explored, or they may be involved in chemotaxis. The sequence is that of Terpene synthase 2 from Physarum polycephalum (Slime mold).